The following is a 301-amino-acid chain: Glycine--tRNA ligase alpha subunit (301 aa).

This sequence belongs to the class-II aminoacyl-tRNA synthetase family. As to quaternary structure, tetramer of two alpha and two beta subunits.

The protein localises to the cytoplasm. It catalyses the reaction tRNA(Gly) + glycine + ATP = glycyl-tRNA(Gly) + AMP + diphosphate. The sequence is that of Glycine--tRNA ligase alpha subunit from Polaromonas sp. (strain JS666 / ATCC BAA-500).